Here is a 259-residue protein sequence, read N- to C-terminus: Aminoglycoside 3'-phosphotransferase (259 aa).

Asp-187 serves as the catalytic Proton acceptor.

It belongs to the aminoglycoside phosphotransferase family.

The catalysed reaction is kanamycin A + ATP = kanamycin 3'-phosphate + ADP + H(+). Functionally, resistance to kanamycin and structurally-related aminoglycosides, including amikacin. This chain is Aminoglycoside 3'-phosphotransferase (aphA-6), found in Acinetobacter baumannii.